The primary structure comprises 144 residues: Transcription antitermination protein NusB (144 aa).

Belongs to the NusB family.

Its function is as follows. Involved in transcription antitermination. Required for transcription of ribosomal RNA (rRNA) genes. Binds specifically to the boxA antiterminator sequence of the ribosomal RNA (rrn) operons. The protein is Transcription antitermination protein NusB of Streptococcus thermophilus (strain CNRZ 1066).